The primary structure comprises 445 residues: Tubulin beta-3 chain (445 aa).

Residues Gln-11, Glu-69, Ser-138, Gly-142, Thr-143, Gly-144, Asn-204, and Asn-226 each contribute to the GTP site. A Mg(2+)-binding site is contributed by Glu-69. The tract at residues 421-445 (EYQQYQDATADEEEEYDEEEEEEAA) is disordered. A compositionally biased stretch (acidic residues) spans 429–445 (TADEEEEYDEEEEEEAA).

Belongs to the tubulin family. As to quaternary structure, dimer of alpha and beta chains. A typical microtubule is a hollow water-filled tube with an outer diameter of 25 nm and an inner diameter of 15 nM. Alpha-beta heterodimers associate head-to-tail to form protofilaments running lengthwise along the microtubule wall with the beta-tubulin subunit facing the microtubule plus end conferring a structural polarity. Microtubules usually have 13 protofilaments but different protofilament numbers can be found in some organisms and specialized cells. Mg(2+) is required as a cofactor.

Its subcellular location is the cytoplasm. It is found in the cytoskeleton. Tubulin is the major constituent of microtubules, a cylinder consisting of laterally associated linear protofilaments composed of alpha- and beta-tubulin heterodimers. Microtubules grow by the addition of GTP-tubulin dimers to the microtubule end, where a stabilizing cap forms. Below the cap, tubulin dimers are in GDP-bound state, owing to GTPase activity of alpha-tubulin. This is Tubulin beta-3 chain (TUBB3) from Triticum aestivum (Wheat).